The sequence spans 337 residues: MQKSLITKWLCISCIMVIATIVIGGITRLTGSGLSIVEWRPVTGILPPFSFESWQSEFAKYKAFPEYNSVNYGITLSQFKFIYLLEFIHRLLGRITALIYIVPLIYFYFKDVIKNRDMLPYIIALLLFCIQGFIGWYMVKSGLLNSPYVSHFRLAFHLIIAVIIYHILFYQLIKNRCDILLILSQTDFKLPLIFSGIAITVVYVQIFLGALVAGLDAGLIYNSFPLMDDRFIPMEIKDNFFDLKNWYDPVFIQFIHRLVGYSVFLVVVVLIICLLKIEHPKLNKIAYFLMIVLFMQVSTGIITLLYSVPIIIASIHQLFAIILLSIIIWCYFLIKSS.

5 consecutive transmembrane segments (helical) span residues 6-26 (ITKWLCISCIMVIATIVIGGI), 87-107 (FIHRLLGRITALIYIVPLIYF), 119-139 (LPYIIALLLFCIQGFIGWYMV), 154-174 (LAFHLIIAVIIYHILFYQLIK), and 192-212 (LIFSGIAITVVYVQIFLGALV). Position 256 (H256) interacts with heme. Helical transmembrane passes span 258–278 (LVGYSVFLVVVVLIICLLKIE), 285–305 (IAYFLMIVLFMQVSTGIITLL), and 308–328 (VPIIIASIHQLFAIILLSIII). H316 is a heme binding site.

This sequence belongs to the COX15/CtaA family. Type 2 subfamily. Interacts with CtaB. Heme b serves as cofactor.

It localises to the cell membrane. The enzyme catalyses Fe(II)-heme o + 2 A + H2O = Fe(II)-heme a + 2 AH2. Its pathway is porphyrin-containing compound metabolism; heme A biosynthesis; heme A from heme O: step 1/1. Functionally, catalyzes the conversion of heme O to heme A by two successive hydroxylations of the methyl group at C8. The first hydroxylation forms heme I, the second hydroxylation results in an unstable dihydroxymethyl group, which spontaneously dehydrates, resulting in the formyl group of heme A. This is Heme A synthase from Rickettsia africae (strain ESF-5).